Consider the following 215-residue polypeptide: Outer-membrane lipoprotein LolB (215 aa).

Residues 1-19 form the signal peptide; it reads MSKLRKITSLIFLTIIMVG. Cys20 is lipidated: N-palmitoyl cysteine. Residue Cys20 is the site of S-diacylglycerol cysteine attachment.

Belongs to the LolB family. Monomer.

It is found in the cell outer membrane. In terms of biological role, plays a critical role in the incorporation of lipoproteins in the outer membrane after they are released by the LolA protein. The polypeptide is Outer-membrane lipoprotein LolB (Vibrio atlanticus (strain LGP32) (Vibrio splendidus (strain Mel32))).